Here is a 213-residue protein sequence, read N- to C-terminus: Octanoyltransferase (213 aa).

The BPL/LPL catalytic domain maps to 27–209; sequence AATPDEVWLC…RLLAAMPEPA (183 aa). Residues 66–73, 140–142, and 153–155 contribute to the substrate site; these read RGGQVTYH, ALG, and GVA. C171 acts as the Acyl-thioester intermediate in catalysis.

The protein belongs to the LipB family.

It is found in the cytoplasm. The catalysed reaction is octanoyl-[ACP] + L-lysyl-[protein] = N(6)-octanoyl-L-lysyl-[protein] + holo-[ACP] + H(+). It participates in protein modification; protein lipoylation via endogenous pathway; protein N(6)-(lipoyl)lysine from octanoyl-[acyl-carrier-protein]: step 1/2. Its function is as follows. Catalyzes the transfer of endogenously produced octanoic acid from octanoyl-acyl-carrier-protein onto the lipoyl domains of lipoate-dependent enzymes. Lipoyl-ACP can also act as a substrate although octanoyl-ACP is likely to be the physiological substrate. The sequence is that of Octanoyltransferase from Bordetella petrii (strain ATCC BAA-461 / DSM 12804 / CCUG 43448).